The chain runs to 489 residues: Glutamyl-tRNA(Gln) amidotransferase subunit A (489 aa).

Active-site charge relay system residues include lysine 78 and serine 153. Serine 177 acts as the Acyl-ester intermediate in catalysis.

It belongs to the amidase family. GatA subfamily. As to quaternary structure, heterotrimer of A, B and C subunits.

It carries out the reaction L-glutamyl-tRNA(Gln) + L-glutamine + ATP + H2O = L-glutaminyl-tRNA(Gln) + L-glutamate + ADP + phosphate + H(+). Functionally, allows the formation of correctly charged Gln-tRNA(Gln) through the transamidation of misacylated Glu-tRNA(Gln) in organisms which lack glutaminyl-tRNA synthetase. The reaction takes place in the presence of glutamine and ATP through an activated gamma-phospho-Glu-tRNA(Gln). This chain is Glutamyl-tRNA(Gln) amidotransferase subunit A, found in Nitratidesulfovibrio vulgaris (strain DP4) (Desulfovibrio vulgaris).